The primary structure comprises 1078 residues: Lon protease homolog, mitochondrial (1078 aa).

The transit peptide at 1 to 27 (MIKASKCNKPRALFLVRVSIPRTFIRN) directs the protein to the mitochondrion. Residues 71–123 (SEKEKQPSTDKSNDKDKPSRKEKGKDKEKENEEKKDINMDEKYEINEETDTKP) show a composition bias toward basic and acidic residues. Positions 71–179 (SEKEKQPSTD…KEFLSPSDSG (109 aa)) are disordered. Low complexity predominate over residues 127-157 (PNNPVSSKSNISSSSGGDNNNNNNNNNNNND). Residues 158-172 (SDGKNDDGSPKDKEF) are compositionally biased toward basic and acidic residues. The 219-residue stretch at 182–400 (PPFLAIAMKD…LSLQLLQVEA (219 aa)) folds into the Lon N-terminal domain. Residue 548–555 (GPPGTGKT) participates in ATP binding. Residues 792–825 (NSPIEYIQSNTEVKAETTTESQQEQEKEKEKDEE) form a disordered region. Over residues 815-825 (EQEKEKEKDEE) the composition is skewed to basic and acidic residues. The Lon proteolytic domain maps to 861–1049 (TLNPGVATGL…SEVFEHLFQG (189 aa)). Catalysis depends on residues Ser955 and Lys998.

Belongs to the peptidase S16 family. In terms of assembly, homohexamer or homoheptamer. Organized in a ring with a central cavity.

The protein localises to the mitochondrion matrix. The enzyme catalyses Hydrolysis of proteins in presence of ATP.. Functionally, ATP-dependent serine protease that mediates the selective degradation of misfolded, unassembled or oxidatively damaged polypeptides as well as certain short-lived regulatory proteins in the mitochondrial matrix. May also have a chaperone function in the assembly of inner membrane protein complexes. Participates in the regulation of mitochondrial gene expression and in the maintenance of the integrity of the mitochondrial genome. Binds to mitochondrial DNA in a site-specific manner. This is Lon protease homolog, mitochondrial from Candida albicans (strain SC5314 / ATCC MYA-2876) (Yeast).